The sequence spans 363 residues: Protein RecA (363 aa).

Position 79–86 (79–86 (GPESSGKT)) interacts with ATP.

The protein belongs to the RecA family.

It is found in the cytoplasm. Functionally, can catalyze the hydrolysis of ATP in the presence of single-stranded DNA, the ATP-dependent uptake of single-stranded DNA by duplex DNA, and the ATP-dependent hybridization of homologous single-stranded DNAs. It interacts with LexA causing its activation and leading to its autocatalytic cleavage. This is Protein RecA from Methylobacterium sp. (strain 4-46).